Here is a 276-residue protein sequence, read N- to C-terminus: Ribosomal RNA small subunit methyltransferase A (276 aa).

S-adenosyl-L-methionine contacts are provided by N19, L21, G46, E71, D94, and N117.

The protein belongs to the class I-like SAM-binding methyltransferase superfamily. rRNA adenine N(6)-methyltransferase family. RsmA subfamily.

It is found in the cytoplasm. It catalyses the reaction adenosine(1518)/adenosine(1519) in 16S rRNA + 4 S-adenosyl-L-methionine = N(6)-dimethyladenosine(1518)/N(6)-dimethyladenosine(1519) in 16S rRNA + 4 S-adenosyl-L-homocysteine + 4 H(+). Functionally, specifically dimethylates two adjacent adenosines (A1518 and A1519) in the loop of a conserved hairpin near the 3'-end of 16S rRNA in the 30S particle. May play a critical role in biogenesis of 30S subunits. This chain is Ribosomal RNA small subunit methyltransferase A, found in Burkholderia ambifaria (strain ATCC BAA-244 / DSM 16087 / CCUG 44356 / LMG 19182 / AMMD) (Burkholderia cepacia (strain AMMD)).